We begin with the raw amino-acid sequence, 58 residues long: Ribosome biogenesis protein Nop10 (58 aa).

This sequence belongs to the NOP10 family.

Its function is as follows. Involved in ribosome biogenesis; more specifically in 18S rRNA pseudouridylation and in cleavage of pre-rRNA. The sequence is that of Ribosome biogenesis protein Nop10 from Methanobrevibacter smithii (strain ATCC 35061 / DSM 861 / OCM 144 / PS).